A 608-amino-acid polypeptide reads, in one-letter code: Elongation factor 4 (608 aa).

Residues 11 to 193 (DRIRNFSIIA…QIVQKIPAPS (183 aa)) form the tr-type G domain. GTP is bound by residues 23–28 (DHGKST) and 140–143 (NKID).

This sequence belongs to the TRAFAC class translation factor GTPase superfamily. Classic translation factor GTPase family. LepA subfamily.

The protein resides in the cell membrane. It carries out the reaction GTP + H2O = GDP + phosphate + H(+). Its function is as follows. Required for accurate and efficient protein synthesis under certain stress conditions. May act as a fidelity factor of the translation reaction, by catalyzing a one-codon backward translocation of tRNAs on improperly translocated ribosomes. Back-translocation proceeds from a post-translocation (POST) complex to a pre-translocation (PRE) complex, thus giving elongation factor G a second chance to translocate the tRNAs correctly. Binds to ribosomes in a GTP-dependent manner. This is Elongation factor 4 from Anoxybacillus flavithermus (strain DSM 21510 / WK1).